The following is a 191-amino-acid chain: Fe/S biogenesis protein NfuA (191 aa).

[4Fe-4S] cluster contacts are provided by cysteine 149 and cysteine 152.

This sequence belongs to the NfuA family. In terms of assembly, homodimer. [4Fe-4S] cluster serves as cofactor.

Its function is as follows. Involved in iron-sulfur cluster biogenesis. Binds a 4Fe-4S cluster, can transfer this cluster to apoproteins, and thereby intervenes in the maturation of Fe/S proteins. Could also act as a scaffold/chaperone for damaged Fe/S proteins. This chain is Fe/S biogenesis protein NfuA, found in Escherichia coli O139:H28 (strain E24377A / ETEC).